The sequence spans 113 residues: Large ribosomal subunit protein uL22 (113 aa).

This sequence belongs to the universal ribosomal protein uL22 family. As to quaternary structure, part of the 50S ribosomal subunit.

This protein binds specifically to 23S rRNA; its binding is stimulated by other ribosomal proteins, e.g. L4, L17, and L20. It is important during the early stages of 50S assembly. It makes multiple contacts with different domains of the 23S rRNA in the assembled 50S subunit and ribosome. Its function is as follows. The globular domain of the protein is located near the polypeptide exit tunnel on the outside of the subunit, while an extended beta-hairpin is found that lines the wall of the exit tunnel in the center of the 70S ribosome. The sequence is that of Large ribosomal subunit protein uL22 from Geobacillus sp. (strain WCH70).